The chain runs to 586 residues: Alpha-1,2-mannosyltransferase MNN5 (586 aa).

The N-terminal stretch at 1–29 is a signal peptide; that stretch reads MLIRLKKRKILQVIVSAVVLILFFCSVHN. N-linked (GlcNAc...) asparagine glycosylation is found at asparagine 113, asparagine 136, asparagine 259, and asparagine 264.

Belongs to the MNN1/MNT family. Post-translationally, glycosylated.

The protein resides in the golgi apparatus. It localises to the cis-Golgi network. Its pathway is protein modification; protein glycosylation. In terms of biological role, responsible for addition of first and second mannose residues to the outer chain of core N-linked polysaccharides and to O-linked mannotriose. Implicated in late Golgi modifications. This is Alpha-1,2-mannosyltransferase MNN5 (MNN5) from Saccharomyces cerevisiae (strain YJM789) (Baker's yeast).